The primary structure comprises 67 residues: DNA-directed RNA polymerase subunit omega (67 aa).

It belongs to the RNA polymerase subunit omega family. In terms of assembly, the RNAP catalytic core consists of 2 alpha, 1 beta, 1 beta' and 1 omega subunit. When a sigma factor is associated with the core the holoenzyme is formed, which can initiate transcription.

It catalyses the reaction RNA(n) + a ribonucleoside 5'-triphosphate = RNA(n+1) + diphosphate. Functionally, promotes RNA polymerase assembly. Latches the N- and C-terminal regions of the beta' subunit thereby facilitating its interaction with the beta and alpha subunits. The protein is DNA-directed RNA polymerase subunit omega of Dictyoglomus turgidum (strain DSM 6724 / Z-1310).